Consider the following 311-residue polypeptide: Malate dehydrogenase (311 aa).

NAD(+) is bound by residues glycine 7–glycine 13 and aspartate 34. Substrate-binding residues include arginine 81 and arginine 87. NAD(+) contacts are provided by residues asparagine 94 and isoleucine 117–asparagine 119. Positions 119 and 153 each coordinate substrate. Catalysis depends on histidine 177, which acts as the Proton acceptor. Methionine 227 is a binding site for NAD(+).

The protein belongs to the LDH/MDH superfamily. MDH type 1 family. In terms of assembly, homodimer.

It carries out the reaction (S)-malate + NAD(+) = oxaloacetate + NADH + H(+). Catalyzes the reversible oxidation of malate to oxaloacetate. In Histophilus somni (strain 2336) (Haemophilus somnus), this protein is Malate dehydrogenase.